Consider the following 172-residue polypeptide: Biogenesis of lysosome-related organelles complex 1 subunit 6 (172 aa).

Positions 1–10 (MSVPEPPPPD) are enriched in pro residues. Disordered regions lie at residues 1–37 (MSVP…PDEG) and 141–172 (QKRQ…AKRT). A coiled-coil region spans residues 63–167 (DLQRSKRALQ…FEREKQLTAK (105 aa)). A compositionally biased stretch (basic and acidic residues) spans 143–164 (RQREELEREQQREKEFEREKQL).

The protein belongs to the BLOC1S6 family. As to quaternary structure, octamer composed of one copy each BLOC1S1, BLOC1S2, BLOC1S3, BLOC1S4, BLOC1S5, BLOC1S6, DTNBP1/BLOC1S7 and SNAPIN/BLOC1S8. Interacts with SNAP47. Homodimer. Component of the biogenesis of lysosome-related organelles complex 1 (BLOC-1) composed of BLOC1S1, BLOC1S2, BLOC1S3, BLOC1S4, BLOC1S5, BLOC1S6, DTNBP1/BLOC1S7 and SNAPIN/BLOC1S8. Interacts with BLOC1S4, BLOC1S5, DTNBP1/BLOC1S7, F-actin, SNAP25 isoform 1 and STX12. Post-translationally, phosphorylated. In terms of tissue distribution, expressed in liver, kidney and spleen (at protein level). Ubiquitously expressed, with the highest expression levels observed in brain, heart, liver and kidney.

It localises to the cytoplasm. It is found in the membrane. Its function is as follows. Component of the BLOC-1 complex, a complex that is required for normal biogenesis of lysosome-related organelles (LRO), such as platelet dense granules and melanosomes. In concert with the AP-3 complex, the BLOC-1 complex is required to target membrane protein cargos into vesicles assembled at cell bodies for delivery into neurites and nerve terminals. The BLOC-1 complex, in association with SNARE proteins, is also proposed to be involved in neurite extension. May play a role in intracellular vesicle trafficking, particularly in the vesicle-docking and fusion process. The chain is Biogenesis of lysosome-related organelles complex 1 subunit 6 (Bloc1s6) from Mus musculus (Mouse).